The chain runs to 352 residues: Chorismate synthase (352 aa).

Arginine 48 provides a ligand contact to NADP(+). FMN is bound by residues arginine 125–serine 127, asparagine 238–alanine 239, glycine 278, lysine 293–serine 297, and arginine 319.

It belongs to the chorismate synthase family. As to quaternary structure, homotetramer. FMNH2 is required as a cofactor.

The enzyme catalyses 5-O-(1-carboxyvinyl)-3-phosphoshikimate = chorismate + phosphate. It functions in the pathway metabolic intermediate biosynthesis; chorismate biosynthesis; chorismate from D-erythrose 4-phosphate and phosphoenolpyruvate: step 7/7. Functionally, catalyzes the anti-1,4-elimination of the C-3 phosphate and the C-6 proR hydrogen from 5-enolpyruvylshikimate-3-phosphate (EPSP) to yield chorismate, which is the branch point compound that serves as the starting substrate for the three terminal pathways of aromatic amino acid biosynthesis. This reaction introduces a second double bond into the aromatic ring system. This Legionella pneumophila subsp. pneumophila (strain Philadelphia 1 / ATCC 33152 / DSM 7513) protein is Chorismate synthase.